Consider the following 409-residue polypeptide: Arginine biosynthesis bifunctional protein ArgJ (409 aa).

Residues T157, K183, T194, E281, N404, and S409 each contribute to the substrate site. Catalysis depends on T194, which acts as the Nucleophile.

Belongs to the ArgJ family. As to quaternary structure, heterotetramer of two alpha and two beta chains.

It localises to the cytoplasm. It carries out the reaction N(2)-acetyl-L-ornithine + L-glutamate = N-acetyl-L-glutamate + L-ornithine. The enzyme catalyses L-glutamate + acetyl-CoA = N-acetyl-L-glutamate + CoA + H(+). It participates in amino-acid biosynthesis; L-arginine biosynthesis; L-ornithine and N-acetyl-L-glutamate from L-glutamate and N(2)-acetyl-L-ornithine (cyclic): step 1/1. The protein operates within amino-acid biosynthesis; L-arginine biosynthesis; N(2)-acetyl-L-ornithine from L-glutamate: step 1/4. Functionally, catalyzes two activities which are involved in the cyclic version of arginine biosynthesis: the synthesis of N-acetylglutamate from glutamate and acetyl-CoA as the acetyl donor, and of ornithine by transacetylation between N(2)-acetylornithine and glutamate. In Zymomonas mobilis subsp. mobilis (strain ATCC 31821 / ZM4 / CP4), this protein is Arginine biosynthesis bifunctional protein ArgJ.